The primary structure comprises 255 residues: uncharacterized protein (255 aa).

It belongs to the methyltransferase superfamily.

This is an uncharacterized protein from Mycolicibacterium paratuberculosis (strain ATCC BAA-968 / K-10) (Mycobacterium paratuberculosis).